The chain runs to 233 residues: Large ribosomal subunit protein uL3 (233 aa).

The interval 145–172 (FGSQRASHGNSRSHRVPGSIGQAQDPGR) is disordered. Position 168 is an N5-methylglutamine (Gln168).

This sequence belongs to the universal ribosomal protein uL3 family. In terms of assembly, part of the 50S ribosomal subunit. Forms a cluster with proteins L14 and L19. Post-translationally, methylated by PrmB.

Functionally, one of the primary rRNA binding proteins, it binds directly near the 3'-end of the 23S rRNA, where it nucleates assembly of the 50S subunit. In Bordetella petrii (strain ATCC BAA-461 / DSM 12804 / CCUG 43448), this protein is Large ribosomal subunit protein uL3.